An 85-amino-acid chain; its full sequence is MNISRSEQRVLHVLAQGGYVRHQRADNGRILDVLCFTRDGHVLADCTLEVFVKLRRKRLIESKASSPYRISDKGRRSVRAQLDNR.

This sequence belongs to the UPF0386 family.

This chain is UPF0386 protein Bind_1628, found in Beijerinckia indica subsp. indica (strain ATCC 9039 / DSM 1715 / NCIMB 8712).